The sequence spans 258 residues: MKGFYMYYLGIILASVIGYFLGSISWSIIIVKKVGNIDIRTVGSGNPGATNTVRTLGKKWGLVVAFLDALKVVFTAIVAILLSMIPNDLFSQTSYFIPCIFALIGHCYPIYYKFKGGKAVSCFLGLLFVVNVLYLIIFLIIWFISVAISRKVSVASMFSALIILLIMWIPYLSGVSYFIWEWNGLEKFRVAWKNYILFSLLNSFHYWFSNTWASGILEGNIIILIGGLILAWRHSQNIKRIKNKTEPDTFPKKVKPVR.

6 helical membrane-spanning segments follow: residues 11 to 31 (IILASVIGYFLGSISWSIIIV), 62 to 82 (LVVAFLDALKVVFTAIVAILL), 94 to 114 (SYFIPCIFALIGHCYPIYYKF), 124 to 144 (LGLLFVVNVLYLIIFLIIWFI), 160 to 180 (ALIILLIMWIPYLSGVSYFIW), and 212 to 232 (WASGILEGNIIILIGGLILAW).

Belongs to the PlsY family. In terms of assembly, probably interacts with PlsX.

The protein resides in the cell membrane. It catalyses the reaction an acyl phosphate + sn-glycerol 3-phosphate = a 1-acyl-sn-glycero-3-phosphate + phosphate. Its pathway is lipid metabolism; phospholipid metabolism. Catalyzes the transfer of an acyl group from acyl-phosphate (acyl-PO(4)) to glycerol-3-phosphate (G3P) to form lysophosphatidic acid (LPA). This enzyme utilizes acyl-phosphate as fatty acyl donor, but not acyl-CoA or acyl-ACP. The polypeptide is Glycerol-3-phosphate acyltransferase (Mycoplasma mycoides subsp. mycoides SC (strain CCUG 32753 / NCTC 10114 / PG1)).